The sequence spans 792 residues: Cis-abienol synthase, chloroplastic (792 aa).

The N-terminal 37 residues, 1–37, are a transit peptide targeting the chloroplast; sequence MVLGLRSKIIPLPDHKLGNIKLGSVTNAICHRPCRVR. The Mg(2+) site is built by aspartate 539, aspartate 543, asparagine 684, and glutamate 692. Residues 539-543 carry the DDXXD motif motif; sequence DDFFD.

This sequence belongs to the terpene synthase family. Mg(2+) is required as a cofactor. In terms of tissue distribution, expressed specifically in trichomes.

The protein resides in the plastid. It localises to the chloroplast. The catalysed reaction is 8-hydroxycopalyl diphosphate = cis-abienol + diphosphate. The protein operates within secondary metabolite biosynthesis; terpenoid biosynthesis. Its function is as follows. Involved in the biosynthesis of cis-abienol, a labdane diterpene that can be used as synthesis precursor of ambergris substitution fragance products. The protein is Cis-abienol synthase, chloroplastic of Nicotiana tabacum (Common tobacco).